An 870-amino-acid polypeptide reads, in one-letter code: Pre-mRNA-processing factor 40 homolog B (870 aa).

WW domains follow at residues 92–125 (GPPR…KPSV) and 133–166 (LLSQ…RPKD). Residues 146–277 (TGKPYYYNNQ…RSGLSWSNRE (132 aa)) form a disordered region. Lys148 bears the N6-acetyllysine mark. Residue Lys175 forms a Glycyl lysine isopeptide (Lys-Gly) (interchain with G-Cter in SUMO2) linkage. Over residues 182 to 191 (QQTQQLQTLQ) the composition is skewed to low complexity. Residues 192–211 (PQPPQPQPDPPPIPPGPIPV) are compositionally biased toward pro residues. 6 consecutive FF domains span residues 276–330 (REKA…YKAQ), 340–397 (RLRA…VLFF), 410–470 (RRRN…HIRA), 490–550 (QRKN…YVEE), 554–610 (RFHD…LLEK), and 625–682 (RMRR…FLQV). The stretch at 604 to 640 (FNSLLEKAEARETEREKEEARRMRRREAAFRSMLRQA) forms a coiled coil. A disordered region spans residues 690–870 (HLHTKGRKHG…TLLQQLDDHQ (181 aa)). Residues 691–711 (LHTKGRKHGRKGKKHHRKRSH) show a composition bias toward basic residues. Low complexity-rich tracts occupy residues 739 to 756 (SESG…ESGG) and 764 to 774 (SPSSHLLLGSD). Ser764 carries the phosphoserine modification. Over residues 778 to 794 (RKTKKPKKKTKKRRHKS) the composition is skewed to basic residues. Residues 804–824 (EDKAGKESEDREQEQDREPRQ) are compositionally biased toward basic and acidic residues. Ser831 is subject to Phosphoserine. Lys837 is covalently cross-linked (Glycyl lysine isopeptide (Lys-Gly) (interchain with G-Cter in SUMO2)). Ser851 is subject to Phosphoserine.

It belongs to the PRPF40 family. As to quaternary structure, interacts with the N-terminus of HD.

The protein resides in the nucleus speckle. Its function is as follows. May be involved in pre-mRNA splicing. This chain is Pre-mRNA-processing factor 40 homolog B (Prpf40b), found in Mus musculus (Mouse).